The primary structure comprises 49 residues: IgW transmembrane form Tm2T7/Tm7T7/Tm3T3 (49 aa).

The N-linked (GlcNAc...) asparagine glycan is linked to asparagine 3. A helical transmembrane segment spans residues valine 25–valine 45.

In terms of tissue distribution, expressed in the spleen. May also be expressed in other lymphoid tissues.

It is found in the membrane. The sequence is that of IgW transmembrane form Tm2T7/Tm7T7/Tm3T3 from Heterodontus francisci (Horn shark).